We begin with the raw amino-acid sequence, 31 residues long: Cytochrome b6-f complex subunit 6 (31 aa).

A helical transmembrane segment spans residues 3 to 23 (ILISYFCFLLIFFLFTLILFF).

This sequence belongs to the PetL family. As to quaternary structure, the 4 large subunits of the cytochrome b6-f complex are cytochrome b6, subunit IV (17 kDa polypeptide, PetD), cytochrome f and the Rieske protein, while the 4 small subunits are PetG, PetL, PetM and PetN. The complex functions as a dimer.

The protein resides in the plastid. The protein localises to the chloroplast thylakoid membrane. Functionally, component of the cytochrome b6-f complex, which mediates electron transfer between photosystem II (PSII) and photosystem I (PSI), cyclic electron flow around PSI, and state transitions. PetL is important for photoautotrophic growth as well as for electron transfer efficiency and stability of the cytochrome b6-f complex. In Gnetum parvifolium (Small-leaved jointfir), this protein is Cytochrome b6-f complex subunit 6.